A 283-amino-acid polypeptide reads, in one-letter code: Spore coat polysaccharide biosynthesis protein SpsK (283 aa).

It belongs to the dTDP-4-dehydrorhamnose reductase family.

It participates in spore coat biogenesis; spore coat polysaccharide biosynthesis. This Bacillus subtilis (strain 168) protein is Spore coat polysaccharide biosynthesis protein SpsK (spsK).